The following is a 252-amino-acid chain: JmjC domain-containing protein A (252 aa).

The JmjC domain maps to 103-252; it reads PYLRNFGMLD…VSCWGKEMIM (150 aa).

This chain is JmjC domain-containing protein A (jcdA), found in Dictyostelium discoideum (Social amoeba).